We begin with the raw amino-acid sequence, 246 residues long: Probable transcriptional regulatory protein Ent638_2432 (246 aa).

This sequence belongs to the TACO1 family.

The protein resides in the cytoplasm. This Enterobacter sp. (strain 638) protein is Probable transcriptional regulatory protein Ent638_2432.